The following is a 317-amino-acid chain: Protein IRX15-LIKE (317 aa).

The chain crosses the membrane as a helical span at residues 27–47; the sequence is LWLLAFVSFFTIAFLLTLLYT.

As to expression, expressed in roots, rosette leaves, stems and siliques. Expressed in the xylem.

Its subcellular location is the golgi apparatus membrane. Required for xylan biosynthesis, but not directly involved in catalyzing the addition of sugars to the growing polymer. In Arabidopsis thaliana (Mouse-ear cress), this protein is Protein IRX15-LIKE (IRX15-L).